The sequence spans 67 residues: Alpha-conotoxin G1.5 (67 aa).

The N-terminal stretch at methionine 1 to serine 21 is a signal peptide. Residues phenylalanine 22–lysine 47 constitute a propeptide that is removed on maturation. 2 disulfides stabilise this stretch: cysteine 49–cysteine 55 and cysteine 50–cysteine 63. Glutamine amide is present on glutamine 65.

Belongs to the conotoxin A superfamily. Expressed by the venom duct.

The protein localises to the secreted. Functionally, alpha-conotoxins act on postsynaptic membranes, they bind to the nicotinic acetylcholine receptors (nAChR) and thus inhibit them. Globular isomer (C1-C3; C2-C4) selectively inhibits neuronal (non-muscle) nAChR subtypes particularly human alpha-3-beta-2/CHRNA3-CHRNB2 (IC(50)=35.7 nM) and alpha-9-alpha-10/CHRNA9-CHRNA10 nAChRs (IC(50)=569 nM), while the ribbon isomer (C1-C4; C2-C3) shows weak inhibition on alpha-3-beta-2/CHRNA3-CHRNB2, but not on all other receptors tested. This chain is Alpha-conotoxin G1.5, found in Conus geographus (Geography cone).